The chain runs to 495 residues: Leucine aminopeptidase 2 (495 aa).

Positions M1–G21 are cleaved as a signal peptide. One can recognise a PA domain in the interval P124–V218. Residues N142 and N235 are each glycosylated (N-linked (GlcNAc...) asparagine). The Zn(2+) site is built by H259 and D271. N-linked (GlcNAc...) asparagine glycosylation is present at N272. E303 (proton acceptor) is an active-site residue. Zn(2+) is bound by residues E304 and D332. An N-linked (GlcNAc...) asparagine glycan is attached at N352. Position 430 (H430) interacts with Zn(2+).

The protein belongs to the peptidase M28 family. M28A subfamily. Monomer. It depends on Zn(2+) as a cofactor.

It is found in the secreted. Extracellular aminopeptidase that releases a wide variety of amino acids from natural peptides and contributes to pathogenicity. The chain is Leucine aminopeptidase 2 (LAP2) from Trichophyton equinum (Horse ringworm fungus).